Here is a 201-residue protein sequence, read N- to C-terminus: UPF0098 protein MT1961 (201 aa).

The disordered stretch occupies residues 125 to 146 (TADGETPGGGISLPNSSGQPAY).

It belongs to the UPF0098 family.

This is UPF0098 protein MT1961 from Mycobacterium tuberculosis (strain CDC 1551 / Oshkosh).